Consider the following 184-residue polypeptide: Elongation factor P (184 aa).

Belongs to the elongation factor P family.

The protein localises to the cytoplasm. It functions in the pathway protein biosynthesis; polypeptide chain elongation. Involved in peptide bond synthesis. Stimulates efficient translation and peptide-bond synthesis on native or reconstituted 70S ribosomes in vitro. Probably functions indirectly by altering the affinity of the ribosome for aminoacyl-tRNA, thus increasing their reactivity as acceptors for peptidyl transferase. The sequence is that of Elongation factor P from Mycoplasma mycoides subsp. mycoides SC (strain CCUG 32753 / NCTC 10114 / PG1).